Reading from the N-terminus, the 416-residue chain is Formyl-CoA:oxalate CoA-transferase (416 aa).

CoA contacts are provided by residues glutamine 17–serine 18, arginine 38, leucine 72–lysine 75, asparagine 96–histidine 98, histidine 104, and lysine 137–glutamate 140. Aspartate 169 (nucleophile) is an active-site residue. Substrate is bound at residue glycine 248 to glutamine 250. CoA is bound at residue glutamine 273–glutamine 275.

It belongs to the CoA-transferase III family. Frc subfamily. Homodimer.

It catalyses the reaction formyl-CoA + oxalate = oxalyl-CoA + formate. Its pathway is metabolic intermediate degradation; oxalate degradation; CO(2) and formate from oxalate: step 1/2. Functionally, involved in the catabolism of oxalate and in the adapatation to low pH via the induction of the oxalate-dependent acid tolerance response (ATR). Catalyzes the transfer of the CoA moiety from formyl-CoA to oxalate. This chain is Formyl-CoA:oxalate CoA-transferase, found in Escherichia coli O17:K52:H18 (strain UMN026 / ExPEC).